A 216-amino-acid polypeptide reads, in one-letter code: Ras-related protein RABA1b (216 aa).

20-27 (GDSGVGKS) serves as a coordination point for GTP. The Effector region motif lies at 42–50 (SKSTIGVEF). GTP contacts are provided by residues 68–72 (DTAGQ), 126–129 (NKSD), and 156–157 (SA). S-geranylgeranyl cysteine attachment occurs at residues Cys213 and Cys214.

This sequence belongs to the small GTPase superfamily. Rab family.

It is found in the cell membrane. Functionally, intracellular vesicle trafficking and protein transport. This Arabidopsis thaliana (Mouse-ear cress) protein is Ras-related protein RABA1b (RABA1B).